Here is a 446-residue protein sequence, read N- to C-terminus: Phosphoglucosamine mutase (446 aa).

Catalysis depends on S102, which acts as the Phosphoserine intermediate. 4 residues coordinate Mg(2+): S102, D241, D243, and D245. S102 carries the post-translational modification Phosphoserine.

The protein belongs to the phosphohexose mutase family. Mg(2+) serves as cofactor. Activated by phosphorylation.

It catalyses the reaction alpha-D-glucosamine 1-phosphate = D-glucosamine 6-phosphate. Catalyzes the conversion of glucosamine-6-phosphate to glucosamine-1-phosphate. The sequence is that of Phosphoglucosamine mutase from Yersinia pseudotuberculosis serotype O:1b (strain IP 31758).